A 630-amino-acid polypeptide reads, in one-letter code: Putative lipase atg15 (630 aa).

Topologically, residues 1 to 20 (MKSSQRRIKRHAMRDMSIST) are cytoplasmic. The helical; Signal-anchor for type II membrane protein transmembrane segment at 21–40 (LLLSVVLLPSVVSANDHVYF) threads the bilayer. Residues 41–630 (NPPSPGSPFL…WGSDIEHYEI (590 aa)) are Lumenal-facing. N-linked (GlcNAc...) asparagine glycans are attached at residues Asn200, Asn222, Asn280, and Asn304. The active-site Charge relay system is Ser320. The N-linked (GlcNAc...) asparagine glycan is linked to Asn466. The span at 577 to 589 (SVTAPPFSTSTSS) shows a compositional bias: polar residues. The interval 577–599 (SVTAPPFSTSTSSDHVRADHSIG) is disordered.

It belongs to the AB hydrolase superfamily. Lipase family. In terms of assembly, binds to both phosphatidylinositol (PI) and phosphatidylinositol 3,5-bisphosphate (PIP2).

The protein localises to the endosome. Its subcellular location is the multivesicular body membrane. The protein resides in the prevacuolar compartment membrane. It catalyses the reaction a triacylglycerol + H2O = a diacylglycerol + a fatty acid + H(+). In terms of biological role, lipase which is essential for lysis of subvacuolar cytoplasm to vacuole targeted bodies and intravacuolar autophagic bodies. Involved in the lysis of intravacuolar multivesicular body (MVB) vesicles. The intravacuolar membrane disintegration by atg15 is critical to life span extension. This chain is Putative lipase atg15 (atg15), found in Aspergillus clavatus (strain ATCC 1007 / CBS 513.65 / DSM 816 / NCTC 3887 / NRRL 1 / QM 1276 / 107).